The following is a 337-amino-acid chain: Phosphoribosylformylglycinamidine cyclo-ligase (337 aa).

It belongs to the AIR synthase family.

The protein localises to the cytoplasm. The enzyme catalyses 2-formamido-N(1)-(5-O-phospho-beta-D-ribosyl)acetamidine + ATP = 5-amino-1-(5-phospho-beta-D-ribosyl)imidazole + ADP + phosphate + H(+). It functions in the pathway purine metabolism; IMP biosynthesis via de novo pathway; 5-amino-1-(5-phospho-D-ribosyl)imidazole from N(2)-formyl-N(1)-(5-phospho-D-ribosyl)glycinamide: step 2/2. This chain is Phosphoribosylformylglycinamidine cyclo-ligase, found in Gloeobacter violaceus (strain ATCC 29082 / PCC 7421).